The sequence spans 1760 residues: Chitin synthase csmB (1760 aa).

Residues 1–17 are compositionally biased toward low complexity; sequence MSNRFSVYSSHSTGVSS. Positions 1–23 are disordered; that stretch reads MSNRFSVYSSHSTGVSSARPSAP. Residues 1 to 374 form the Myosin motor domain; sequence MSNRFSVYSS…TVSITVVDIP (374 aa). Residue N275 is glycosylated (N-linked (GlcNAc...) asparagine). Positions 344 to 363 are disordered; it reads LDNDPSTSGGSGPGGQWTDD. P374 is a region of interest (actin-binding). 2 helical membrane passes run 731–751 and 767–787; these read IWVGFVWALTFWIPSFALRWI and LVLMLIILLFNGVVCFYIIAF. 3 N-linked (GlcNAc...) asparagine glycosylation sites follow: N878, N906, and N995. A helical membrane pass occupies residues 1029 to 1049; the sequence is ILLSFTVLICAVILVKFVSAL. N-linked (GlcNAc...) asparagine glycosylation is present at N1394. Transmembrane regions (helical) follow at residues 1419 to 1439, 1452 to 1472, and 1480 to 1500; these read FVVLVDLLGTVILPATCVYLG, FPMISIVILAGVYGLQAIIFL, and IGWMIIYICAYPIYNFILPLY. N-linked (GlcNAc...) asparagine glycans are attached at residues N1584 and N1652. Residues 1702–1758 form the DEK-C domain; the sequence is GPDEGAITEAIRACLAEVDLDTVTKKQVRALVEQRLQTTLMGDKRTFLDRQIDHELA.

The protein in the N-terminal section; belongs to the TRAFAC class myosin-kinesin ATPase superfamily. Myosin family. This sequence in the C-terminal section; belongs to the chitin synthase family. Class V subfamily.

Its subcellular location is the cell membrane. It localises to the cell septum. The protein resides in the cell tip. It catalyses the reaction [(1-&gt;4)-N-acetyl-beta-D-glucosaminyl](n) + UDP-N-acetyl-alpha-D-glucosamine = [(1-&gt;4)-N-acetyl-beta-D-glucosaminyl](n+1) + UDP + H(+). Functionally, polymerizes chitin, a structural polymer of the cell wall and septum, by transferring the sugar moiety of UDP-GlcNAc to the non-reducing end of the growing chitin polymer. Plays an important role in septal growth or maintenance. Mediates colony spore formation. The chain is Chitin synthase csmB from Aspergillus niger (strain ATCC MYA-4892 / CBS 513.88 / FGSC A1513).